The chain runs to 138 residues: ATP synthase epsilon chain (138 aa).

The protein belongs to the ATPase epsilon chain family. F-type ATPases have 2 components, CF(1) - the catalytic core - and CF(0) - the membrane proton channel. CF(1) has five subunits: alpha(3), beta(3), gamma(1), delta(1), epsilon(1). CF(0) has three main subunits: a, b and c.

It localises to the cell membrane. In terms of biological role, produces ATP from ADP in the presence of a proton gradient across the membrane. The sequence is that of ATP synthase epsilon chain from Streptococcus equinus (Streptococcus bovis).